The following is a 216-amino-acid chain: MRVILLGAPGAGKGTQAKFITEKFGIPQISTGDMLRAAVKAGTPLGLELKKVMDAGQLVSDELIISLVKERIAQPDCANGCLFDGFPRTIPQAEAMVAAGVDIDAVVEIAVDDEEIVGRMAGRRVHLASGRTYHIQYNPPKVEGKDDETGEDLIQRDDDKEETVRHRLSVYHSQTKPLVDFYQKLSAANGGKPKYSHIEGVGSVEAITAKVLAALS.

10-15 contacts ATP; sequence GAGKGT. Residues 30 to 59 form an NMP region; the sequence is STGDMLRAAVKAGTPLGLELKKVMDAGQLV. AMP is bound by residues Thr-31, Arg-36, 57-59, 85-88, and Gln-92; these read QLV and GFPR. The LID stretch occupies residues 122–159; it reads GRRVHLASGRTYHIQYNPPKVEGKDDETGEDLIQRDDD. Residues Arg-123 and 132 to 133 each bind ATP; that span reads TY. Residues Arg-156 and Arg-167 each coordinate AMP. Gly-202 provides a ligand contact to ATP.

This sequence belongs to the adenylate kinase family. As to quaternary structure, monomer.

Its subcellular location is the cytoplasm. The catalysed reaction is AMP + ATP = 2 ADP. The protein operates within purine metabolism; AMP biosynthesis via salvage pathway; AMP from ADP: step 1/1. In terms of biological role, catalyzes the reversible transfer of the terminal phosphate group between ATP and AMP. Plays an important role in cellular energy homeostasis and in adenine nucleotide metabolism. This Pseudomonas putida (strain ATCC 700007 / DSM 6899 / JCM 31910 / BCRC 17059 / LMG 24140 / F1) protein is Adenylate kinase.